Here is a 208-residue protein sequence, read N- to C-terminus: Large ribosomal subunit protein bL25 (208 aa).

Residues 1 to 21 (MSNEFSLNAEKRDVQGKGASR) are disordered.

This sequence belongs to the bacterial ribosomal protein bL25 family. CTC subfamily. Part of the 50S ribosomal subunit; part of the 5S rRNA/L5/L18/L25 subcomplex. Contacts the 5S rRNA. Binds to the 5S rRNA independently of L5 and L18.

Functionally, this is one of the proteins that binds to the 5S RNA in the ribosome where it forms part of the central protuberance. This Hahella chejuensis (strain KCTC 2396) protein is Large ribosomal subunit protein bL25.